Here is a 47-residue protein sequence, read N- to C-terminus: Small ribosomal subunit protein uS14 (47 aa).

Zn(2+)-binding residues include cysteine 12, cysteine 15, cysteine 30, and cysteine 33.

The protein belongs to the universal ribosomal protein uS14 family. Zinc-binding uS14 subfamily. In terms of assembly, part of the 30S ribosomal subunit. Requires Zn(2+) as cofactor.

Its function is as follows. Binds 16S rRNA, required for the assembly of 30S particles. This chain is Small ribosomal subunit protein uS14, found in Methanosphaera stadtmanae (strain ATCC 43021 / DSM 3091 / JCM 11832 / MCB-3).